A 308-amino-acid chain; its full sequence is UPF0026 protein jhp_0109 (308 aa).

The region spanning 18-247 is the Radical SAM core domain; it reads FGKSLGVDLS…VSLPKRSTAQ (230 aa). 3 residues coordinate [4Fe-4S] cluster: Cys-33, Cys-37, and Cys-40.

The protein belongs to the UPF0026 family. [4Fe-4S] cluster is required as a cofactor.

In Helicobacter pylori (strain J99 / ATCC 700824) (Campylobacter pylori J99), this protein is UPF0026 protein jhp_0109.